Reading from the N-terminus, the 484-residue chain is Aspartyl aminopeptidase (484 aa).

The residue at position 1 (methionine 1) is an N-acetylmethionine. A Zn(2+)-binding site is contributed by histidine 84. Histidine 159 lines the substrate pocket. The span at 188–206 shows a compositional bias: low complexity; that stretch reads PVESKSTTTTTTTESPKTS. Positions 188-213 are disordered; the sequence is PVESKSTTTTTTTESPKTSDPQDVNS. Residue aspartate 266 participates in Zn(2+) binding. Glutamate 301 lines the substrate pocket. Positions 302 and 354 each coordinate Zn(2+). Residues aspartate 354, histidine 357, lysine 382, and tyrosine 389 each contribute to the substrate site. Histidine 448 contributes to the Zn(2+) binding site.

It belongs to the peptidase M18 family. Tetrahedron-shaped homododecamer built from six homodimers. Zn(2+) is required as a cofactor.

It is found in the cytoplasm. It catalyses the reaction Release of an N-terminal aspartate or glutamate from a peptide, with a preference for aspartate.. Likely to play an important role in intracellular protein and peptide metabolism. In Dictyostelium discoideum (Social amoeba), this protein is Aspartyl aminopeptidase (dnpep).